We begin with the raw amino-acid sequence, 426 residues long: MNLWLWLLYFLPVSGTLKVLPEVRLEVELGGSVFIECPLPQTHVRMYLCRQMTNPAICATVVSNIFVKKEYKRRVTLKPSLNKKLFLVEMTQLTKDDEGIYACGVGTNTDLGKTQKVTLNVRNEFPEYPEPFWDDEPTSEPSPRWWLHRYPEELPWLKMGEHASPSGFIDKVTTLSPKTEAPPVHQPSTNTSVSRHPRVYGASSETPTKPSALLPATTAFKTSARQASRLLEASYSHHTRLHGERTPHYGSQYGREDRGLHISIPEFHILIPTFLGFLLLVLLGLVVKRAIQRRRAFSRRVGRMARRMRGRGPSRQIPTQRRDAPQRPRSQNNVYSACPRRAREPDNVGSAEALLLNAPASAPPALPLVIETSWPHTPSLKMSCEYVSLGHQPAVNVEDQDSNDYINIPGLPHLPSKPPGPRPSRQ.

An N-terminal signal peptide occupies residues 1-16 (MNLWLWLLYFLPVSGT). The Ig-like domain maps to 24–121 (RLEVELGGSV…GKTQKVTLNV (98 aa)). 2 disulfide bridges follow: Cys37/Cys103 and Cys49/Cys58. Thr91 is subject to Phosphothreonine. Residues 178–212 (KTEAPPVHQPSTNTSVSRHPRVYGASSETPTKPSA) are disordered. A helical membrane pass occupies residues 267 to 287 (FHILIPTFLGFLLLVLLGLVV). Disordered stretches follow at residues 306 to 346 (RRMR…REPD) and 401 to 426 (DSNDYINIPGLPHLPSKPPGPRPSRQ). Positions 415 to 426 (PSKPPGPRPSRQ) are enriched in pro residues.

As to quaternary structure, interacts (via Ig-like domain) with IGHM (via CH4/Cmu4 domain), both secreted and membrane-bound IgM; the interaction is glycan-independent and multivalent theoretically involving up to eight binding sites for the IgM pentamer. Phosphorylated on both Tyr and Ser residues. Post-translationally, O-glycosylated. Sialylated. O-linked glycans regulate trafficking to the plasma membrane.

The protein localises to the cell membrane. The protein resides in the early endosome membrane. It is found in the golgi apparatus. Its subcellular location is the trans-Golgi network membrane. It localises to the lysosome membrane. Functionally, high-affinity Fc receptor for immunoglobulin M (IgM), both secreted and membrane-bound IgM. Primarily regulates IgM transport and homeostasis. In lymphoid cells, enables exocytosis of membrane-bound IgM on the plasma membrane as well as endocytosis of IgM-antigen complexes toward lysosomes for degradation. In mucosal epithelium, mediates retrotranscytosis of antigen-IgM complexes across mucosal M cells toward antigen-presenting cells in mucosal lymphoid tissues. Triggers costimulatory signaling and mediates most of IgM effector functions involved in B cell development and primary immune response to infection. Likely limits tonic IgM BCR signaling to self-antigens for proper negative selection of autoreactive B cells in the bone marrow and for the maintenance of regulatory B cell pool in peripheral lymphoid organs. Mediates antibody responses to T cell-dependent and T cell-independent antigens and promotes induction of an efficient neutralizing IgG response. Engages in cross-talk with antigen-receptor signaling via the non-canonical NF-kappa-B, MAP kinases and calcium signaling pathways. This Rattus norvegicus (Rat) protein is Immunoglobulin mu Fc receptor.